Reading from the N-terminus, the 218-residue chain is Putative glutamine transport system permease protein GlnP (218 aa).

The 190-residue stretch at 19–208 (TLVTLKYSII…ILVMLISFIA (190 aa)) folds into the ABC transmembrane type-1 domain. The next 4 helical transmembrane spans lie at 25-45 (YSII…ICKV), 57-79 (FYTS…FAAP), 86-108 (FSVF…SEVI), and 187-207 (FFPM…ISFI).

This sequence belongs to the binding-protein-dependent transport system permease family. HisMQ subfamily.

Its subcellular location is the cell inner membrane. Its function is as follows. Part of the binding-protein-dependent transport system for glutamine; probably responsible for the translocation of the substrate across the membrane. The sequence is that of Putative glutamine transport system permease protein GlnP (glnP) from Rickettsia typhi (strain ATCC VR-144 / Wilmington).